Here is a 258-residue protein sequence, read N- to C-terminus: Acyl-[acyl-carrier-protein]--UDP-N-acetylglucosamine O-acyltransferase (258 aa).

It belongs to the transferase hexapeptide repeat family. LpxA subfamily. As to quaternary structure, homotrimer.

It localises to the cytoplasm. It catalyses the reaction a (3R)-hydroxyacyl-[ACP] + UDP-N-acetyl-alpha-D-glucosamine = a UDP-3-O-[(3R)-3-hydroxyacyl]-N-acetyl-alpha-D-glucosamine + holo-[ACP]. It participates in glycolipid biosynthesis; lipid IV(A) biosynthesis; lipid IV(A) from (3R)-3-hydroxytetradecanoyl-[acyl-carrier-protein] and UDP-N-acetyl-alpha-D-glucosamine: step 1/6. In terms of biological role, involved in the biosynthesis of lipid A, a phosphorylated glycolipid that anchors the lipopolysaccharide to the outer membrane of the cell. This chain is Acyl-[acyl-carrier-protein]--UDP-N-acetylglucosamine O-acyltransferase, found in Thiobacillus denitrificans (strain ATCC 25259 / T1).